A 137-amino-acid chain; its full sequence is Chaperone protein YscB (137 aa).

Interacts with SycN to form a complex which specifically binds to YopN.

The protein localises to the cytoplasm. It localises to the cell inner membrane. In terms of biological role, functions as a specific chaperone for YopN. It could facilitate the secretion and the subsequent translocation of YopN. The polypeptide is Chaperone protein YscB (yscB) (Yersinia pestis).